The chain runs to 710 residues: Polyribonucleotide nucleotidyltransferase (710 aa).

Asp-489 and Asp-495 together coordinate Mg(2+). The KH domain maps to 556–615 (PKIDTIKIDVDKIKVVIGKGGETIDKIIAETGVKIDIDDEGNVSIYSSDQAAIDRTKEII). The region spanning 625 to 693 (GEVYHAKVIR…EKGRVDASMK (69 aa)) is the S1 motif domain.

Belongs to the polyribonucleotide nucleotidyltransferase family. It depends on Mg(2+) as a cofactor.

It is found in the cytoplasm. The enzyme catalyses RNA(n+1) + phosphate = RNA(n) + a ribonucleoside 5'-diphosphate. In terms of biological role, involved in mRNA degradation. Catalyzes the phosphorolysis of single-stranded polyribonucleotides processively in the 3'- to 5'-direction. The protein is Polyribonucleotide nucleotidyltransferase of Streptococcus pyogenes serotype M3 (strain ATCC BAA-595 / MGAS315).